Reading from the N-terminus, the 62-residue chain is Ribulose bisphosphate carboxylase/oxygenase activase, chloroplastic (62 aa).

Belongs to the RuBisCO activase family.

The protein resides in the plastid. It is found in the chloroplast stroma. Functionally, activation of RuBisCO (ribulose-1,5-bisphosphate carboxylase/oxygenase; EC 4.1.1.39) involves the ATP-dependent carboxylation of the epsilon-amino group of lysine leading to a carbamate structure. This Vitis sp. (Grape) protein is Ribulose bisphosphate carboxylase/oxygenase activase, chloroplastic.